We begin with the raw amino-acid sequence, 510 residues long: Beta-glucosidase 26 (510 aa).

The N-terminal stretch at 1 to 27 (MRKFIAALRLALAAAAHLLLTLPPAQC) is a signal peptide. Gln59 contacts a beta-D-glucoside. Asn87 and Asn127 each carry an N-linked (GlcNAc...) asparagine glycan. A beta-D-glucoside contacts are provided by residues His160 and 205-206 (NE). Catalysis depends on Glu206, which acts as the Proton donor. Cysteines 225 and 228 form a disulfide. N-linked (GlcNAc...) asparagine glycosylation is present at Asn233. Positions 345 and 416 each coordinate a beta-D-glucoside. Glu416 serves as the catalytic Nucleophile. N-linked (GlcNAc...) asparagine glycosylation occurs at Asn424. Residues Trp463, 470–471 (EW), and Phe479 contribute to the a beta-D-glucoside site.

It belongs to the glycosyl hydrolase 1 family.

The catalysed reaction is Hydrolysis of terminal, non-reducing beta-D-glucosyl residues with release of beta-D-glucose.. Functionally, hydrolyzes p-nitrophenyl beta-D-glucoside, p-nitrophenyl beta-D-mannoside, p-nitrophenyl beta-D-galactoside, p-nitrophenyl beta-D-xyloside, p-nitrophenyl beta-D-fucoside, p-nitrophenyl beta-L-arabinoside, cello-oligosaccharides, laminari-oligosaccharides and sophorose. The protein is Beta-glucosidase 26 (BGLU26) of Oryza sativa subsp. japonica (Rice).